Reading from the N-terminus, the 237-residue chain is Large ribosomal subunit protein uL2 (237 aa).

Residues 1 to 11 (MGKRIISQNRG) are compositionally biased toward polar residues. Disordered regions lie at residues 1 to 20 (MGKR…YRAP) and 201 to 237 (FGGG…GVRR).

It belongs to the universal ribosomal protein uL2 family. As to quaternary structure, part of the 50S ribosomal subunit. Forms a bridge to the 30S subunit in the 70S ribosome.

Its function is as follows. One of the primary rRNA binding proteins. Required for association of the 30S and 50S subunits to form the 70S ribosome, for tRNA binding and peptide bond formation. It has been suggested to have peptidyltransferase activity; this is somewhat controversial. Makes several contacts with the 16S rRNA in the 70S ribosome. The polypeptide is Large ribosomal subunit protein uL2 (Archaeoglobus fulgidus (strain ATCC 49558 / DSM 4304 / JCM 9628 / NBRC 100126 / VC-16)).